Reading from the N-terminus, the 346-residue chain is Holliday junction branch migration complex subunit RuvB (346 aa).

The large ATPase domain (RuvB-L) stretch occupies residues 1 to 183 (MTEQRIIASS…FGIVQRLEFY (183 aa)). ATP is bound by residues Ile-22, Arg-23, Gly-64, Lys-67, Thr-68, Thr-69, 130-132 (EDF), Arg-173, Tyr-183, and Arg-220. Residue Thr-68 participates in Mg(2+) binding. The tract at residues 184–254 (SPQELTRIVS…VAQAAMQMLK (71 aa)) is small ATPAse domain (RuvB-S). Positions 257-346 (PEGFDELDRR…PGIGEPGDLF (90 aa)) are head domain (RuvB-H). Arg-293, Arg-312, and Arg-317 together coordinate DNA.

This sequence belongs to the RuvB family. Homohexamer. Forms an RuvA(8)-RuvB(12)-Holliday junction (HJ) complex. HJ DNA is sandwiched between 2 RuvA tetramers; dsDNA enters through RuvA and exits via RuvB. An RuvB hexamer assembles on each DNA strand where it exits the tetramer. Each RuvB hexamer is contacted by two RuvA subunits (via domain III) on 2 adjacent RuvB subunits; this complex drives branch migration. In the full resolvosome a probable DNA-RuvA(4)-RuvB(12)-RuvC(2) complex forms which resolves the HJ.

The protein resides in the cytoplasm. It carries out the reaction ATP + H2O = ADP + phosphate + H(+). Its function is as follows. The RuvA-RuvB-RuvC complex processes Holliday junction (HJ) DNA during genetic recombination and DNA repair, while the RuvA-RuvB complex plays an important role in the rescue of blocked DNA replication forks via replication fork reversal (RFR). RuvA specifically binds to HJ cruciform DNA, conferring on it an open structure. The RuvB hexamer acts as an ATP-dependent pump, pulling dsDNA into and through the RuvAB complex. RuvB forms 2 homohexamers on either side of HJ DNA bound by 1 or 2 RuvA tetramers; 4 subunits per hexamer contact DNA at a time. Coordinated motions by a converter formed by DNA-disengaged RuvB subunits stimulates ATP hydrolysis and nucleotide exchange. Immobilization of the converter enables RuvB to convert the ATP-contained energy into a lever motion, pulling 2 nucleotides of DNA out of the RuvA tetramer per ATP hydrolyzed, thus driving DNA branch migration. The RuvB motors rotate together with the DNA substrate, which together with the progressing nucleotide cycle form the mechanistic basis for DNA recombination by continuous HJ branch migration. Branch migration allows RuvC to scan DNA until it finds its consensus sequence, where it cleaves and resolves cruciform DNA. This Xanthomonas euvesicatoria pv. vesicatoria (strain 85-10) (Xanthomonas campestris pv. vesicatoria) protein is Holliday junction branch migration complex subunit RuvB.